The following is a 77-amino-acid chain: Acyl carrier protein (77 aa).

The Carrier domain occupies serine 2–threonine 77. At serine 37 the chain carries O-(pantetheine 4'-phosphoryl)serine.

Belongs to the acyl carrier protein (ACP) family. Post-translationally, 4'-phosphopantetheine is transferred from CoA to a specific serine of apo-ACP by AcpS. This modification is essential for activity because fatty acids are bound in thioester linkage to the sulfhydryl of the prosthetic group.

The protein resides in the cytoplasm. It functions in the pathway lipid metabolism; fatty acid biosynthesis. Carrier of the growing fatty acid chain in fatty acid biosynthesis. This Geotalea uraniireducens (strain Rf4) (Geobacter uraniireducens) protein is Acyl carrier protein.